A 351-amino-acid chain; its full sequence is Biotin synthase (351 aa).

The Radical SAM core domain occupies 42-269; sequence NEVQVSTLLS…KSHVRLSAGR (228 aa). [4Fe-4S] cluster contacts are provided by C57, C61, and C64. [2Fe-2S] cluster is bound by residues C101, C132, C192, and R264.

Belongs to the radical SAM superfamily. Biotin synthase family. As to quaternary structure, homodimer. [4Fe-4S] cluster serves as cofactor. Requires [2Fe-2S] cluster as cofactor.

The enzyme catalyses (4R,5S)-dethiobiotin + (sulfur carrier)-SH + 2 reduced [2Fe-2S]-[ferredoxin] + 2 S-adenosyl-L-methionine = (sulfur carrier)-H + biotin + 2 5'-deoxyadenosine + 2 L-methionine + 2 oxidized [2Fe-2S]-[ferredoxin]. It functions in the pathway cofactor biosynthesis; biotin biosynthesis; biotin from 7,8-diaminononanoate: step 2/2. Catalyzes the conversion of dethiobiotin (DTB) to biotin by the insertion of a sulfur atom into dethiobiotin via a radical-based mechanism. This chain is Biotin synthase, found in Psychromonas ingrahamii (strain DSM 17664 / CCUG 51855 / 37).